Consider the following 171-residue polypeptide: Neudesin (171 aa).

Residues 1-30 (MARPAPWWWLRPLAALALALALVRVPSARA) form the signal peptide. The 86-residue stretch at 43 to 128 (VRLFTEEELA…KELEALDDIF (86 aa)) folds into the Cytochrome b5 heme-binding domain. Lysine 135 bears the N6-acetyllysine mark. Residues 151–171 (GSPNLDFKPEDQPHFDIKDEF) are disordered. The span at 157–171 (FKPEDQPHFDIKDEF) shows a compositional bias: basic and acidic residues.

The protein belongs to the cytochrome b5 family. MAPR subfamily. Interacts with PINK1 and PARK7.

It is found in the secreted. It localises to the extracellular space. The protein resides in the mitochondrion. Its subcellular location is the endoplasmic reticulum. Its function is as follows. Acts as a neurotrophic factor in postnatal mature neurons enhancing neuronal survival. Promotes cell proliferation and neurogenesis in undifferentiated neural progenitor cells at the embryonic stage and inhibits differentiation of astrocytes. Its neurotrophic activity is exerted via MAPK1/ERK2, MAPK3/ERK1 and AKT1/AKT pathways. Neurotrophic activity is enhanced by binding to heme. Also acts as an anorexigenic neurotrophic factor that contributes to energy balance. This Rattus norvegicus (Rat) protein is Neudesin.